Reading from the N-terminus, the 366-residue chain is 1-deoxy-D-xylulose 5-phosphate reductoisomerase (366 aa).

7 residues coordinate NADPH: Thr-7, Gly-8, Ser-9, Ile-10, Gly-31, Asn-33, and Asn-111. Lys-112 contacts 1-deoxy-D-xylulose 5-phosphate. Glu-113 is a binding site for NADPH. Asp-131 lines the Mn(2+) pocket. 1-deoxy-D-xylulose 5-phosphate-binding residues include Ser-132, Glu-133, Ser-162, and His-185. Glu-133 provides a ligand contact to Mn(2+). Gly-191 serves as a coordination point for NADPH. Ser-198, Asn-203, Lys-204, and Glu-207 together coordinate 1-deoxy-D-xylulose 5-phosphate. Glu-207 is a Mn(2+) binding site.

Belongs to the DXR family. Requires Mg(2+) as cofactor. It depends on Mn(2+) as a cofactor.

The enzyme catalyses 2-C-methyl-D-erythritol 4-phosphate + NADP(+) = 1-deoxy-D-xylulose 5-phosphate + NADPH + H(+). It participates in isoprenoid biosynthesis; isopentenyl diphosphate biosynthesis via DXP pathway; isopentenyl diphosphate from 1-deoxy-D-xylulose 5-phosphate: step 1/6. Functionally, catalyzes the NADPH-dependent rearrangement and reduction of 1-deoxy-D-xylulose-5-phosphate (DXP) to 2-C-methyl-D-erythritol 4-phosphate (MEP). The polypeptide is 1-deoxy-D-xylulose 5-phosphate reductoisomerase (Nautilia profundicola (strain ATCC BAA-1463 / DSM 18972 / AmH)).